A 136-amino-acid chain; its full sequence is Large ribosomal subunit protein uL16 (136 aa).

Belongs to the universal ribosomal protein uL16 family. In terms of assembly, part of the 50S ribosomal subunit.

Functionally, binds 23S rRNA and is also seen to make contacts with the A and possibly P site tRNAs. The sequence is that of Large ribosomal subunit protein uL16 from Photobacterium profundum (strain SS9).